Consider the following 442-residue polypeptide: Myb family transcription factor PHL13 (442 aa).

Residues 235 to 295 form the HTH myb-type domain; it reads MTSKQRMRWT…HLQKYRTARY (61 aa). Residues 266–291 constitute a DNA-binding region (H-T-H motif); the sequence is PKAVLKLINSPGLTVYHVKSHLQKYR. The segment at 329–349 is coiled coil; it reads TEALRLQMKVQKQLHEQLEIQ. An LHEQLE motif is present at residues 342 to 347; that stretch reads LHEQLE. The segment covering 370 to 380 has biased composition (basic and acidic residues); that stretch reads QQKMQENKKDS. Residues 370–442 are disordered; the sequence is QQKMQENKKD…TSNRKRVRED (73 aa). Residues 395 to 434 are compositionally biased toward polar residues; that stretch reads SPNLSQPFLHKATNSEPSITQKLQNGSSTMDQSESTSGTS.

Belongs to the MYB-CC family.

It localises to the nucleus. The chain is Myb family transcription factor PHL13 from Arabidopsis thaliana (Mouse-ear cress).